The sequence spans 210 residues: MPSRSKSSQRWLKEHFADPYVKKARAEGMRSRAAYKLEELLQRDRLLKPGMVVVDLGAAPGGWSQQVRKSMGDSGRVVALDILDMPALAGVEFLHGDFREQAVLSQFEAMLGDVPVDLVLSDMAPNKSGMDAVDQPRMMHLAELAMEFADAHLKPGGAFLIKLFQGVGSDDYIRELRRRYEKVTIRKPAASRKRSPEVYALGQGKRVQIK.

5 residues coordinate S-adenosyl-L-methionine: Gly61, Trp63, Asp81, Asp97, and Asp122. The Proton acceptor role is filled by Lys162.

It belongs to the class I-like SAM-binding methyltransferase superfamily. RNA methyltransferase RlmE family.

Its subcellular location is the cytoplasm. The enzyme catalyses uridine(2552) in 23S rRNA + S-adenosyl-L-methionine = 2'-O-methyluridine(2552) in 23S rRNA + S-adenosyl-L-homocysteine + H(+). Functionally, specifically methylates the uridine in position 2552 of 23S rRNA at the 2'-O position of the ribose in the fully assembled 50S ribosomal subunit. This is Ribosomal RNA large subunit methyltransferase E from Xanthomonas oryzae pv. oryzae (strain MAFF 311018).